The primary structure comprises 191 residues: MSIKSDRWIRHMAKQHGMIAPFEPGQIKQNTTGQRIVSYGTSSYGYDVRCSREFKIFTNINSTIVDPKQFDNGSFIDVESDVCIIPPNSFALARTIEYFRIPRNVLVICLGKSTYARCGIIVNVTPLEPEWEGHVTLEFSNTTPLPARIYANEGVAQMLFLQADPDDVCETSYRDRNGKYQGQTGVTLPRT.

DCTP is bound by residues 112 to 117 (KSTYAR), 136 to 138 (TLE), Gln157, Tyr173, and Gln183. Glu138 functions as the Proton donor/acceptor in the catalytic mechanism.

This sequence belongs to the dCTP deaminase family. In terms of assembly, homotrimer.

The enzyme catalyses dCTP + H2O + H(+) = dUTP + NH4(+). The protein operates within pyrimidine metabolism; dUMP biosynthesis; dUMP from dCTP (dUTP route): step 1/2. Its function is as follows. Catalyzes the deamination of dCTP to dUTP. This is dCTP deaminase from Xylella fastidiosa (strain M12).